A 288-amino-acid polypeptide reads, in one-letter code: Acetyl-coenzyme A carboxylase carboxyl transferase subunit beta (288 aa).

Residues 34-288 form the CoA carboxyltransferase N-terminal domain; the sequence is LFAKCPACKH…HLVAFHGGVS (255 aa). Zn(2+)-binding residues include C38, C41, C56, and C59. Residues 38–59 form a C4-type zinc finger; it reads CPACKHMIYQKDLGPAKICPTC.

It belongs to the AccD/PCCB family. In terms of assembly, acetyl-CoA carboxylase is a heterohexamer composed of biotin carboxyl carrier protein (AccB), biotin carboxylase (AccC) and two subunits each of ACCase subunit alpha (AccA) and ACCase subunit beta (AccD). It depends on Zn(2+) as a cofactor.

It is found in the cytoplasm. The catalysed reaction is N(6)-carboxybiotinyl-L-lysyl-[protein] + acetyl-CoA = N(6)-biotinyl-L-lysyl-[protein] + malonyl-CoA. Its pathway is lipid metabolism; malonyl-CoA biosynthesis; malonyl-CoA from acetyl-CoA: step 1/1. Component of the acetyl coenzyme A carboxylase (ACC) complex. Biotin carboxylase (BC) catalyzes the carboxylation of biotin on its carrier protein (BCCP) and then the CO(2) group is transferred by the transcarboxylase to acetyl-CoA to form malonyl-CoA. This chain is Acetyl-coenzyme A carboxylase carboxyl transferase subunit beta, found in Streptococcus equi subsp. equi (strain 4047).